The chain runs to 532 residues: Probable rhamnogalacturonase B (532 aa).

Residues 1–21 (MRINTLSLFSLVSLVPTLALA) form the signal peptide. C42 and C68 are disulfide-bonded. D219 acts as the Proton donor in catalysis. Cysteines 221 and 238 form a disulfide. Residue N239 is glycosylated (N-linked (GlcNAc...) asparagine). The active site involves H294. N-linked (GlcNAc...) asparagine glycosylation is present at N321. Cystine bridges form between C344/C350 and C374/C383. Low complexity-rich tracts occupy residues 466–475 (TVAAATSTPA) and 490–499 (QPSQQSPGQS). The disordered stretch occupies residues 466–532 (TVAAATSTPA…HRHHQRHGHH (67 aa)). Residues 521 to 532 (AGHRHHQRHGHH) are compositionally biased toward basic residues.

This sequence belongs to the glycosyl hydrolase 28 family.

Its subcellular location is the secreted. The catalysed reaction is Endohydrolysis of alpha-D-GalA-(1-&gt;2)-alpha-L-Rha glycosidic bond in the rhamnogalacturonan I backbone with initial inversion of anomeric configuration releasing oligosaccharides with beta-D-GalA at the reducing end.. Its function is as follows. Pectinolytic enzymes consist of four classes of enzymes: pectine lyase, polygalacturonase, pectin methylesterase and rhamnogalacturonase. Hydrolyzes alpha-D-galacturonopyranosyl-(1,2)-alpha-L-rhamnopyranosyl linkages in the backbone of the hairy regions of pectins. The chain is Probable rhamnogalacturonase B (rhgB) from Aspergillus oryzae (strain ATCC 42149 / RIB 40) (Yellow koji mold).